The sequence spans 348 residues: Ferredoxin--NADP reductase (348 aa).

Residues Thr-26, Glu-45, Gln-53, Tyr-58, Ala-98, Phe-133, Asp-299, and Ser-340 each coordinate FAD.

The protein belongs to the ferredoxin--NADP reductase type 2 family. In terms of assembly, homodimer. FAD is required as a cofactor.

The catalysed reaction is 2 reduced [2Fe-2S]-[ferredoxin] + NADP(+) + H(+) = 2 oxidized [2Fe-2S]-[ferredoxin] + NADPH. In Prosthecochloris aestuarii (strain DSM 271 / SK 413), this protein is Ferredoxin--NADP reductase.